Here is a 410-residue protein sequence, read N- to C-terminus: Elongation factor Tu (410 aa).

Residues 10-214 (KPHVNIGTIG…EVDAYIPTPE (205 aa)) form the tr-type G domain. The G1 stretch occupies residues 19-26 (GHVDHGKT). Residue 19–26 (GHVDHGKT) coordinates GTP. A Mg(2+)-binding site is contributed by threonine 26. Positions 60-64 (GITIN) are G2. The G3 stretch occupies residues 81 to 84 (DCPG). GTP contacts are provided by residues 81–85 (DCPGH) and 136–139 (NKED). The G4 stretch occupies residues 136 to 139 (NKED). A G5 region spans residues 174–176 (SAL).

The protein belongs to the TRAFAC class translation factor GTPase superfamily. Classic translation factor GTPase family. EF-Tu/EF-1A subfamily. In terms of assembly, monomer.

The protein localises to the cytoplasm. The enzyme catalyses GTP + H2O = GDP + phosphate + H(+). Functionally, GTP hydrolase that promotes the GTP-dependent binding of aminoacyl-tRNA to the A-site of ribosomes during protein biosynthesis. This is Elongation factor Tu from Gloeothece citriformis (strain PCC 7424) (Cyanothece sp. (strain PCC 7424)).